The primary structure comprises 429 residues: Glutamate-1-semialdehyde 2,1-aminomutase 2 (429 aa).

Residue Lys268 is modified to N6-(pyridoxal phosphate)lysine.

The protein belongs to the class-III pyridoxal-phosphate-dependent aminotransferase family. HemL subfamily. As to quaternary structure, homodimer. Pyridoxal 5'-phosphate serves as cofactor.

The protein localises to the cytoplasm. The catalysed reaction is (S)-4-amino-5-oxopentanoate = 5-aminolevulinate. The protein operates within porphyrin-containing compound metabolism; protoporphyrin-IX biosynthesis; 5-aminolevulinate from L-glutamyl-tRNA(Glu): step 2/2. The polypeptide is Glutamate-1-semialdehyde 2,1-aminomutase 2 (Halalkalibacterium halodurans (strain ATCC BAA-125 / DSM 18197 / FERM 7344 / JCM 9153 / C-125) (Bacillus halodurans)).